A 924-amino-acid polypeptide reads, in one-letter code: Periplasmic nitrate reductase (924 aa).

Residues 1 to 30 constitute a signal peptide (tat-type signal); that stretch reads MNRRDFIKNTAIASAASVAGLSVPSSMLGA. Residues 35 to 91 enclose the 4Fe-4S Mo/W bis-MGD-type domain; sequence WKWDKAVCRFCGTGCGIMIARKDGKIVATKGDPAAPVNRGLNCIKGYFNAKIMYGED. Residues Cys-42, Cys-45, Cys-49, and Cys-77 each coordinate [4Fe-4S] cluster. Residues Lys-79, Gln-147, Asn-172, Cys-176, 209–216, Met-417, Gln-421, Asn-527, 552–553, Lys-575, Asp-602, and 814–823 contribute to the Mo-bis(molybdopterin guanine dinucleotide) site; these read WGANMAEM, SD, and TGRVLEHWHS. Trp-890 contacts substrate. Mo-bis(molybdopterin guanine dinucleotide) is bound by residues Asn-898 and Lys-915.

This sequence belongs to the prokaryotic molybdopterin-containing oxidoreductase family. NasA/NapA/NarB subfamily. Component of the periplasmic nitrate reductase NapAB complex composed of NapA and NapB. [4Fe-4S] cluster serves as cofactor. The cofactor is Mo-bis(molybdopterin guanine dinucleotide). In terms of processing, predicted to be exported by the Tat system. The position of the signal peptide cleavage has not been experimentally proven.

Its subcellular location is the periplasm. The enzyme catalyses 2 Fe(II)-[cytochrome] + nitrate + 2 H(+) = 2 Fe(III)-[cytochrome] + nitrite + H2O. In terms of biological role, catalytic subunit of the periplasmic nitrate reductase complex NapAB. Receives electrons from NapB and catalyzes the reduction of nitrate to nitrite. This is Periplasmic nitrate reductase from Campylobacter jejuni subsp. jejuni serotype O:6 (strain 81116 / NCTC 11828).